A 473-amino-acid polypeptide reads, in one-letter code: Heavy metal-associated isoprenylated plant protein 32 (473 aa).

Positions 9-72 (IQTCVLKVNI…KLAKSGKHAE (64 aa)) constitute an HMA domain. The a metal cation site is built by cysteine 20 and cysteine 23. 3 disordered regions span residues 96-139 (QIDH…KMGQ), 162-230 (KLPP…PNMT), and 246-343 (ANLA…QNMS). Over residues 118–131 (KNGGGGGGGGGGGN) the composition is skewed to gly residues. Residues 187 to 217 (PEDDDDDDFSDEFDDEFTDDDDDEFDDEFDD) are compositionally biased toward acidic residues. The segment covering 253-339 (AKNGGKGAPA…GFRPMGGGGP (87 aa)) has biased composition (gly residues). Residue cysteine 470 is modified to Cysteine methyl ester. Cysteine 470 is lipidated: S-farnesyl cysteine. The propeptide at 471–473 (DIM) is removed in mature form.

The protein belongs to the HIPP family.

Heavy-metal-binding protein. This chain is Heavy metal-associated isoprenylated plant protein 32, found in Arabidopsis thaliana (Mouse-ear cress).